The primary structure comprises 330 residues: Dof zinc finger protein DOF2.4 (330 aa).

Over residues 14 to 25 the composition is skewed to polar residues; it reads NWQQAPPSNYNH. The segment at 14–70 is disordered; sequence NWQQAPPSNYNHDGTGASANGGHVLRPQLQPQQQPQQQPHPNGSGGGGGGGGGSIRA. Residues 40 to 55 are compositionally biased toward low complexity; it reads PQLQPQQQPQQQPHPN. The span at 56–68 shows a compositional bias: gly residues; the sequence is GSGGGGGGGGGSI. The Dof-type zinc finger occupies 89 to 143; that stretch reads LKCPRCESTNTKFCYFNNYSLTQPRHFCKTCRRYWTRGGALRNVPVGGGCRRNRR. Zn(2+)-binding residues include Cys91, Cys94, Cys116, and Cys119. Disordered regions lie at residues 133 to 165 and 255 to 276; these read PVGGGCRRNRRTKSNSNNNNNSTATSNNTSFSS and QQSSMGGGNLEDSSNPNPSANG. Positions 146–165 are enriched in low complexity; it reads SNSNNNNNSTATSNNTSFSS. The segment covering 265–276 has biased composition (polar residues); that stretch reads EDSSNPNPSANG.

As to expression, specific to the vascular tissues. The PEAR proteins (e.g. DOF2.4, DOF5.1, DOF3.2, DOF1.1, DOF5.6 and DOF5.3) form a short-range concentration gradient that peaks at protophloem sieve elements (PSE).

It localises to the nucleus. Its subcellular location is the symplast. Functionally, transcription factor that binds specifically to a 5'-AA[AG]G-3' consensus core sequence. Probably involved in early processes for vascular development. The PEAR proteins (e.g. DOF2.4, DOF5.1, DOF3.2, DOF1.1, DOF5.6 and DOF5.3) activate gene expression that promotes radial growth of protophloem sieve elements. Triggers the transcription of HD-ZIP III genes, especially in the central domain of vascular tissue. The protein is Dof zinc finger protein DOF2.4 of Arabidopsis thaliana (Mouse-ear cress).